Here is a 231-residue protein sequence, read N- to C-terminus: Putative cobalt transport protein CbiM 1 (231 aa).

A run of 6 helical transmembrane segments spans residues 9 to 29, 41 to 61, 74 to 94, 107 to 127, 135 to 155, and 181 to 201; these read PGPWWQIWWILSIPVFAYGIF, VLPLIAVSGAVIFVLSSLKLP, GMAVILFGPAITSVLSAIVLL, TFGANLMSMGIIGPFVAYAIY, VNFYVSAFVTATLADWVTYVV, and VFAITQIPLAILEASLITLLF.

The protein belongs to the CbiM family. As to quaternary structure, forms an energy-coupling factor (ECF) transporter complex composed of an ATP-binding protein (A component, CbiO), a transmembrane protein (T component, CbiQ) and 2 possible substrate-capture proteins (S components, CbiM and CbiN) of unknown stoichimetry.

It localises to the cell membrane. It participates in cofactor biosynthesis; adenosylcobalamin biosynthesis. Part of the energy-coupling factor (ECF) transporter complex CbiMNOQ involved in cobalt import. In Methanosarcina barkeri (strain Fusaro / DSM 804), this protein is Putative cobalt transport protein CbiM 1.